Reading from the N-terminus, the 362-residue chain is Aspartate carbamoyltransferase catalytic subunit (362 aa).

A disordered region spans residues 1-22 (MPKTAMTDSTSKTSTNTASSDM). Residues 7–20 (TDSTSKTSTNTASS) are compositionally biased toward low complexity. Residues Arg-100 and Thr-101 each contribute to the carbamoyl phosphate site. Residue Lys-128 participates in L-aspartate binding. Residues Arg-150, His-180, and Gln-183 each contribute to the carbamoyl phosphate site. L-aspartate is bound by residues Arg-214 and Arg-269. 2 residues coordinate carbamoyl phosphate: Gly-310 and Pro-311.

The protein belongs to the aspartate/ornithine carbamoyltransferase superfamily. ATCase family. As to quaternary structure, heterododecamer (2C3:3R2) of six catalytic PyrB chains organized as two trimers (C3), and six regulatory PyrI chains organized as three dimers (R2).

The enzyme catalyses carbamoyl phosphate + L-aspartate = N-carbamoyl-L-aspartate + phosphate + H(+). It participates in pyrimidine metabolism; UMP biosynthesis via de novo pathway; (S)-dihydroorotate from bicarbonate: step 2/3. Its function is as follows. Catalyzes the condensation of carbamoyl phosphate and aspartate to form carbamoyl aspartate and inorganic phosphate, the committed step in the de novo pyrimidine nucleotide biosynthesis pathway. The protein is Aspartate carbamoyltransferase catalytic subunit of Psychrobacter sp. (strain PRwf-1).